The following is an 82-amino-acid chain: 4-(gamma-L-glutamylamino)butanoyl-[BtrI acyl-carrier protein] monooxygenase BtrO (82 aa).

As to quaternary structure, homotetramer.

It carries out the reaction 4-(gamma-L-glutamylamino)butanoyl-[BtrI ACP] + FMNH2 + O2 = 4-(gamma-L-glutamylamino)-(2S)-2-hydroxybutanoyl-[BtrI ACP] + FMN + H2O + H(+). The protein operates within antibiotic biosynthesis; butirosin biosynthesis. NAD(P)H:FMN oxidoreductase component of a two-component system involved in the biosynthesis of the side chain of the aminoglycoside antibiotics in the biosynthetic pathway of butirosin. Together with BtrO, mediates hydroxylation of gamma-L-Glu-GABA-S-BtrI. The sequence is that of 4-(gamma-L-glutamylamino)butanoyl-[BtrI acyl-carrier protein] monooxygenase BtrO (btrV) from Niallia circulans (Bacillus circulans).